We begin with the raw amino-acid sequence, 966 residues long: Mitogen-activated protein kinase kinase kinase 13 (966 aa).

Residues Met1–Gly59 are disordered. The segment covering Leu8–Ser19 has biased composition (low complexity). In terms of domain architecture, Protein kinase spans Ile168–Ile409. ATP contacts are provided by residues Leu174–Val182 and Lys195. The active-site Proton acceptor is the Asp279. Leucine-zipper regions lie at residues Val433–Leu454 and Leu486–Val507. A coiled-coil region spans residues Arg457–Arg496. Disordered regions lie at residues Glu561–Ile663, Leu743–Ala874, and Gln937–Trp966. Low complexity predominate over residues Ser567–Lys581. Residues Ser582–Asn594 are compositionally biased toward basic residues. Polar residues predominate over residues Gln609–His622. Positions Pro629 to Gln642 are enriched in low complexity. Residues Asp814–Val827 show a composition bias toward acidic residues. An acidic region spans residues Ser815–Glu828. Residues Ser840 to Val855 show a composition bias toward polar residues. The segment covering Glu939–Cys950 has biased composition (acidic residues). Positions Thr954–Trp966 are enriched in polar residues.

The protein belongs to the protein kinase superfamily. Ser/Thr protein kinase family. Homodimer; forms dimers through the leucine-zipper motif. Interacts with the C-terminus of MAPK8IP1 through the kinase catalytic domain. Binds PRDX3. Associates with the IKK complex through the kinase domain. It depends on Mg(2+) as a cofactor. In terms of processing, autophosphorylated on serine and threonine residues.

The protein localises to the cytoplasm. The protein resides in the membrane. It carries out the reaction L-seryl-[protein] + ATP = O-phospho-L-seryl-[protein] + ADP + H(+). The enzyme catalyses L-threonyl-[protein] + ATP = O-phospho-L-threonyl-[protein] + ADP + H(+). With respect to regulation, activated by autophosphorylation and homodimerization. Its function is as follows. Activates the JUN N-terminal pathway through activation of the MAP kinase kinase MAP2K7. Acts synergistically with PRDX3 to regulate the activation of NF-kappa-B in the cytosol. This activation is kinase-dependent and involves activating the IKK complex, the IKBKB-containing complex that phosphorylates inhibitors of NF-kappa-B. The polypeptide is Mitogen-activated protein kinase kinase kinase 13 (MAP3K13) (Bos taurus (Bovine)).